Consider the following 145-residue polypeptide: Basic phospholipase A2 cL037 (145 aa).

The signal sequence occupies residues 1–21 (MYPAHLLVLLAVCVSLLGASA). The propeptide occupies 22–27 (ILPLPL). 7 disulfide bridges follow: Cys38–Cys98, Cys54–Cys144, Cys56–Cys72, Cys71–Cys125, Cys78–Cys118, Cys87–Cys111, and Cys105–Cys116. Residues Tyr55, Gly57, and Gly59 each coordinate Ca(2+). The active site involves His75. Residue Asp76 coordinates Ca(2+). Asp119 is a catalytic residue.

It belongs to the phospholipase A2 family. Group I subfamily. D49 sub-subfamily. Ca(2+) serves as cofactor. In terms of tissue distribution, expressed by the venom gland.

It localises to the secreted. The enzyme catalyses a 1,2-diacyl-sn-glycero-3-phosphocholine + H2O = a 1-acyl-sn-glycero-3-phosphocholine + a fatty acid + H(+). In terms of biological role, PLA2 catalyzes the calcium-dependent hydrolysis of the 2-acyl groups in 3-sn-phosphoglycerides. This Laticauda semifasciata (Black-banded sea krait) protein is Basic phospholipase A2 cL037.